The chain runs to 182 residues: Peptidoglycan L,D-endopeptidase MepK (182 aa).

Residues 1-30 (MDKFDANRRKLLALGGVALGAAILPTPAFA) constitute a signal peptide (tat-type signal). Residues His-133, Asp-140, and His-173 each coordinate Zn(2+).

This sequence belongs to the peptidase M15 family. The cofactor is Zn(2+). Post-translationally, predicted to be exported by the Tat system. The position of the signal peptide cleavage has not been experimentally proven.

The protein operates within cell wall biogenesis; cell wall polysaccharide biosynthesis. In terms of biological role, l,D-endopeptidase that cleaves meso-diaminopimelic acid (mDAP)-mDAP cross-links in peptidoglycan. It works in conjunction with other elongation-specific D,D-endopeptidases to make space for efficient incorporation of nascent peptidoglycan strands into the sacculus and thus enable cell wall expansion. The sequence is that of Peptidoglycan L,D-endopeptidase MepK from Escherichia coli O157:H7.